The sequence spans 205 residues: Ribonuclease HII (205 aa).

The 191-residue stretch at 15 to 205 (SRVCGIDEAG…SFKLRKLGEK (191 aa)) folds into the RNase H type-2 domain. Residues Asp21, Glu22, and Asp117 each contribute to the a divalent metal cation site.

This sequence belongs to the RNase HII family. It depends on Mn(2+) as a cofactor. The cofactor is Mg(2+).

The protein localises to the cytoplasm. It catalyses the reaction Endonucleolytic cleavage to 5'-phosphomonoester.. Endonuclease that specifically degrades the RNA of RNA-DNA hybrids. In Chlorobaculum parvum (strain DSM 263 / NCIMB 8327) (Chlorobium vibrioforme subsp. thiosulfatophilum), this protein is Ribonuclease HII.